We begin with the raw amino-acid sequence, 843 residues long: Taste receptor type 1 member 2 (843 aa).

An N-terminal signal peptide occupies residues 1–19 (MGPQARTLCLLSLLLHVLP). The Extracellular segment spans residues 20 to 570 (KPGKLVENSD…TFLEWHEVPT (551 aa)). Residues N87, N296, N316, N355, N372, N432, N484, N491, and N531 are each glycosylated (N-linked (GlcNAc...) asparagine). The chain crosses the membrane as a helical span at residues 571–591 (IVVAILAALGFFSTLAILFIF). The Cytoplasmic portion of the chain corresponds to 592–606 (WRHFQTPMVRSAGGP). A helical transmembrane segment spans residues 607–627 (MCFLMLVPLLLAFGMVPVYVG). Residues 628-642 (PPTVFSCFCRQAFFT) lie on the Extracellular side of the membrane. Residues 643 to 663 (VCFSICLSCITVRSFQIVCVF) form a helical membrane-spanning segment. Over 664–682 (KMARRLPSAYSFWMRYHGP) the chain is Cytoplasmic. A helical membrane pass occupies residues 683–703 (YVFVAFITAIKVALVVGNMLA). The Extracellular portion of the chain corresponds to 704-731 (TTINPIGRTDPDDPNIMILSCHPNYRNG). Residues 732–752 (LLFNTSMDLLLSVLGFSFAYM) traverse the membrane as a helical segment. Residues 753–764 (GKELPTNYNEAK) lie on the Cytoplasmic side of the membrane. The chain crosses the membrane as a helical span at residues 765 to 785 (FITLSMTFSFTSSISLCTFMS). Over 786 to 789 (VHDG) the chain is Extracellular. Residues 790-810 (VLVTIMDLLVTVLNFLAIGLG) form a helical membrane-spanning segment. Over 811–843 (YFGPKCYMILFYPERNTSAYFNSMIQGYTMRKS) the chain is Cytoplasmic.

Belongs to the G-protein coupled receptor 3 family. TAS1R subfamily. In terms of assembly, forms heterodimers with TAS1R3. In terms of tissue distribution, abundantly expressed in circumvallate and foliate papillae.

The protein resides in the cell membrane. Its function is as follows. Putative taste receptor. TAS1R2/TAS1R3 recognizes diverse natural and synthetic sweeteners. In Rattus norvegicus (Rat), this protein is Taste receptor type 1 member 2 (Tas1r2).